We begin with the raw amino-acid sequence, 378 residues long: Mannitol-1-phosphate 5-dehydrogenase (378 aa).

4 to 15 (SVHFGAGNIGRG) contributes to the NAD(+) binding site.

The protein belongs to the mannitol dehydrogenase family.

It catalyses the reaction D-mannitol 1-phosphate + NAD(+) = beta-D-fructose 6-phosphate + NADH + H(+). The chain is Mannitol-1-phosphate 5-dehydrogenase from Streptococcus pneumoniae (strain Hungary19A-6).